Consider the following 673-residue polypeptide: UvrABC system protein B (673 aa).

A Helicase ATP-binding domain is found at 26–414; the sequence is EGLEDGLAHQ…GGDVVDQVVR (389 aa). 39–46 provides a ligand contact to ATP; sequence GVTGSGKT. The Beta-hairpin motif lies at 92–115; sequence YYDYYQPEAYVPSSDTFIEKDASV. The Helicase C-terminal domain maps to 431–597; it reads QVDDLLSEIR…GLNKKVVDIL (167 aa). The UVR domain maps to 633–668; it reads QQKIHELEGLMMQHAQNLEFEEAAQIRDQLHQLREL.

It belongs to the UvrB family. As to quaternary structure, forms a heterotetramer with UvrA during the search for lesions. Interacts with UvrC in an incision complex.

The protein resides in the cytoplasm. The UvrABC repair system catalyzes the recognition and processing of DNA lesions. A damage recognition complex composed of 2 UvrA and 2 UvrB subunits scans DNA for abnormalities. Upon binding of the UvrA(2)B(2) complex to a putative damaged site, the DNA wraps around one UvrB monomer. DNA wrap is dependent on ATP binding by UvrB and probably causes local melting of the DNA helix, facilitating insertion of UvrB beta-hairpin between the DNA strands. Then UvrB probes one DNA strand for the presence of a lesion. If a lesion is found the UvrA subunits dissociate and the UvrB-DNA preincision complex is formed. This complex is subsequently bound by UvrC and the second UvrB is released. If no lesion is found, the DNA wraps around the other UvrB subunit that will check the other stand for damage. This Shigella flexneri protein is UvrABC system protein B.